A 300-amino-acid chain; its full sequence is GTPase Era (300 aa).

The Era-type G domain maps to K6–E173. Residues G14 to S21 form a G1 region. GTP is bound at residue G14–S21. The segment at Q40–N44 is G2. The G3 stretch occupies residues D61 to G64. Residues D61–I65 and N123–D126 contribute to the GTP site. The segment at N123–D126 is G4. The tract at residues I152–A154 is G5. Positions T204 to K281 constitute a KH type-2 domain.

This sequence belongs to the TRAFAC class TrmE-Era-EngA-EngB-Septin-like GTPase superfamily. Era GTPase family. In terms of assembly, monomer.

It is found in the cytoplasm. The protein resides in the cell membrane. In terms of biological role, an essential GTPase that binds both GDP and GTP, with rapid nucleotide exchange. Plays a role in 16S rRNA processing and 30S ribosomal subunit biogenesis and possibly also in cell cycle regulation and energy metabolism. This is GTPase Era from Enterococcus faecalis (strain ATCC 700802 / V583).